Here is a 289-residue protein sequence, read N- to C-terminus: ATP synthase gamma chain (289 aa).

Belongs to the ATPase gamma chain family. F-type ATPases have 2 components, CF(1) - the catalytic core - and CF(0) - the membrane proton channel. CF(1) has five subunits: alpha(3), beta(3), gamma(1), delta(1), epsilon(1). CF(0) has three main subunits: a, b and c.

The protein localises to the cell inner membrane. Produces ATP from ADP in the presence of a proton gradient across the membrane. The gamma chain is believed to be important in regulating ATPase activity and the flow of protons through the CF(0) complex. The polypeptide is ATP synthase gamma chain (Azorhizobium caulinodans (strain ATCC 43989 / DSM 5975 / JCM 20966 / LMG 6465 / NBRC 14845 / NCIMB 13405 / ORS 571)).